Consider the following 235-residue polypeptide: Flagellar L-ring protein (235 aa).

An N-terminal signal peptide occupies residues methionine 1–glycine 18. Residue cysteine 19 is the site of N-palmitoyl cysteine attachment. Cysteine 19 is lipidated: S-diacylglycerol cysteine.

This sequence belongs to the FlgH family. The basal body constitutes a major portion of the flagellar organelle and consists of four rings (L,P,S, and M) mounted on a central rod.

The protein resides in the cell outer membrane. Its subcellular location is the bacterial flagellum basal body. Assembles around the rod to form the L-ring and probably protects the motor/basal body from shearing forces during rotation. This Chelativorans sp. (strain BNC1) protein is Flagellar L-ring protein.